Here is a 591-residue protein sequence, read N- to C-terminus: V-type ATP synthase alpha chain (591 aa).

Residue 242–249 participates in ATP binding; the sequence is GPFGAGKT.

This sequence belongs to the ATPase alpha/beta chains family.

The catalysed reaction is ATP + H2O + 4 H(+)(in) = ADP + phosphate + 5 H(+)(out). Produces ATP from ADP in the presence of a proton gradient across the membrane. The V-type alpha chain is a catalytic subunit. This Chlamydia trachomatis serovar A (strain ATCC VR-571B / DSM 19440 / HAR-13) protein is V-type ATP synthase alpha chain.